Consider the following 212-residue polypeptide: Large ribosomal subunit protein uL3 (212 aa).

Residues 128–146 (RHGASRGPMKHGSKYHRRT) are compositionally biased toward basic residues. A disordered region spans residues 128 to 164 (RHGASRGPMKHGSKYHRRTGSLGAKGPARVFKGRNLP).

It belongs to the universal ribosomal protein uL3 family. In terms of assembly, part of the 50S ribosomal subunit. Forms a cluster with proteins L14 and L19.

In terms of biological role, one of the primary rRNA binding proteins, it binds directly near the 3'-end of the 23S rRNA, where it nucleates assembly of the 50S subunit. In Desulfitobacterium hafniense (strain Y51), this protein is Large ribosomal subunit protein uL3.